The sequence spans 346 residues: UDP-3-O-acylglucosamine N-acyltransferase (346 aa).

Histidine 240 serves as the catalytic Proton acceptor.

The protein belongs to the transferase hexapeptide repeat family. LpxD subfamily. In terms of assembly, homotrimer.

It carries out the reaction a UDP-3-O-[(3R)-3-hydroxyacyl]-alpha-D-glucosamine + a (3R)-hydroxyacyl-[ACP] = a UDP-2-N,3-O-bis[(3R)-3-hydroxyacyl]-alpha-D-glucosamine + holo-[ACP] + H(+). It participates in bacterial outer membrane biogenesis; LPS lipid A biosynthesis. Functionally, catalyzes the N-acylation of UDP-3-O-acylglucosamine using 3-hydroxyacyl-ACP as the acyl donor. Is involved in the biosynthesis of lipid A, a phosphorylated glycolipid that anchors the lipopolysaccharide to the outer membrane of the cell. This chain is UDP-3-O-acylglucosamine N-acyltransferase, found in Bacteroides fragilis (strain ATCC 25285 / DSM 2151 / CCUG 4856 / JCM 11019 / LMG 10263 / NCTC 9343 / Onslow / VPI 2553 / EN-2).